Consider the following 62-residue polypeptide: MGMRMMFTVFLLVVLATTVVSFTLDRASDGANAAADLVARGIRGNCCMFHTCPIDYSRFYCP.

An N-terminal signal peptide occupies residues 1–21; sequence MGMRMMFTVFLLVVLATTVVS. Residues 22 to 40 constitute a propeptide that is removed on maturation; that stretch reads FTLDRASDGANAAADLVAR. Disulfide bonds link C46–C52 and C47–C61.

The protein belongs to the conotoxin A superfamily. Post-translationally, both Pro-53 and Pro-62 are not in cis/trans isomerization. In terms of tissue distribution, expressed by the venom duct.

Its subcellular location is the secreted. Its function is as follows. Probable neurotoxin with unknown target. Possibly targets ion channels. In Conus planorbis (Planorbis cone), this protein is Conotoxin Pl168.